The sequence spans 164 residues: Phosphopantetheine adenylyltransferase (164 aa).

Residue Ser9 coordinates substrate. Residues 9–10 (SF) and His17 each bind ATP. 3 residues coordinate substrate: Lys41, Val78, and Arg92. ATP is bound by residues 93–95 (GLR), Glu103, and 128–134 (VRTITAT).

Belongs to the bacterial CoaD family. Homohexamer. It depends on Mg(2+) as a cofactor.

It is found in the cytoplasm. The enzyme catalyses (R)-4'-phosphopantetheine + ATP + H(+) = 3'-dephospho-CoA + diphosphate. The protein operates within cofactor biosynthesis; coenzyme A biosynthesis; CoA from (R)-pantothenate: step 4/5. In terms of biological role, reversibly transfers an adenylyl group from ATP to 4'-phosphopantetheine, yielding dephospho-CoA (dPCoA) and pyrophosphate. The polypeptide is Phosphopantetheine adenylyltransferase (Brucella abortus (strain 2308)).